We begin with the raw amino-acid sequence, 531 residues long: NADH-quinone oxidoreductase subunit N (531 aa).

Transmembrane regions (helical) follow at residues 8–28, 41–61, 81–101, 146–166, 172–192, 208–228, 250–270, 282–302, 318–338, 350–370, 372–392, 418–438, 453–473, and 500–520; these read VEYF…AGVL, AQVT…IVVA, ATLF…VFMA, GATQ…MMVF, LLTM…MCGL, FLLG…LYGA, ALAG…AVPF, PTPI…GALL, PVLW…AVNQ, VAHV…GLSA, LFYL…VGLV, IVGV…LTSG, GAVP…YFYV, and AAIA…QPVL.

Belongs to the complex I subunit 2 family. NDH-1 is composed of 14 different subunits. Subunits NuoA, H, J, K, L, M, N constitute the membrane sector of the complex.

The protein resides in the cell membrane. The enzyme catalyses a quinone + NADH + 5 H(+)(in) = a quinol + NAD(+) + 4 H(+)(out). Functionally, NDH-1 shuttles electrons from NADH, via FMN and iron-sulfur (Fe-S) centers, to quinones in the respiratory chain. The immediate electron acceptor for the enzyme in this species is believed to be a menaquinone. Couples the redox reaction to proton translocation (for every two electrons transferred, four hydrogen ions are translocated across the cytoplasmic membrane), and thus conserves the redox energy in a proton gradient. This Mycobacterium tuberculosis (strain CDC 1551 / Oshkosh) protein is NADH-quinone oxidoreductase subunit N.